Here is a 432-residue protein sequence, read N- to C-terminus: UDP-N-acetylmuramate--L-alanine ligase (432 aa).

An ATP-binding site is contributed by 109–115 (GAHGKST).

The protein belongs to the MurCDEF family.

It localises to the cytoplasm. The enzyme catalyses UDP-N-acetyl-alpha-D-muramate + L-alanine + ATP = UDP-N-acetyl-alpha-D-muramoyl-L-alanine + ADP + phosphate + H(+). It functions in the pathway cell wall biogenesis; peptidoglycan biosynthesis. In terms of biological role, cell wall formation. This is UDP-N-acetylmuramate--L-alanine ligase from Campylobacter jejuni subsp. jejuni serotype O:2 (strain ATCC 700819 / NCTC 11168).